Consider the following 184-residue polypeptide: Peptide deformylase 2 (184 aa).

Fe cation-binding residues include Cys-110 and His-153. Glu-154 is a catalytic residue. Residue His-157 coordinates Fe cation.

The protein belongs to the polypeptide deformylase family. Fe(2+) serves as cofactor.

It catalyses the reaction N-terminal N-formyl-L-methionyl-[peptide] + H2O = N-terminal L-methionyl-[peptide] + formate. Functionally, removes the formyl group from the N-terminal Met of newly synthesized proteins. Requires at least a dipeptide for an efficient rate of reaction. N-terminal L-methionine is a prerequisite for activity but the enzyme has broad specificity at other positions. This chain is Peptide deformylase 2, found in Bacillus cereus (strain ATCC 14579 / DSM 31 / CCUG 7414 / JCM 2152 / NBRC 15305 / NCIMB 9373 / NCTC 2599 / NRRL B-3711).